The sequence spans 470 residues: Cell division protein FtsA (470 aa).

The tract at residues 416–470 (NKKDTHENEVESTDEEIYQSEDNHQEHKQNHEHVQDKDKDKEESKFKKLMKSLFE) is disordered. Acidic residues predominate over residues 425-434 (VESTDEEIYQ). The span at 436–461 (EDNHQEHKQNHEHVQDKDKDKEESKF) shows a compositional bias: basic and acidic residues.

Belongs to the FtsA/MreB family. Self-interacts. Interacts with FtsZ.

Its subcellular location is the cell membrane. Functionally, cell division protein that is involved in the assembly of the Z ring. May serve as a membrane anchor for the Z ring. The polypeptide is Cell division protein FtsA (Staphylococcus aureus (strain MSSA476)).